Reading from the N-terminus, the 1394-residue chain is Tubulin glycylase 3E (1394 aa).

Disordered stretches follow at residues 201–230, 563–582, 620–663, and 682–706; these read KKKS…QRKE, NQKD…QNSI, DENE…TSNF, and STVK…NLKE. Low complexity predominate over residues 205–216; that stretch reads NFQNKSQSQLNN. Positions 217 to 230 are enriched in basic and acidic residues; the sequence is HKNEEKKPSQQRKE. Residues 568 to 582 show a composition bias toward low complexity; that stretch reads QSNQTSSVISQQNSI. Over residues 627-655 the composition is skewed to polar residues; sequence KENVLQQKKNQSNQIVTSQQQSNNYFKQE. The span at 682–703 shows a compositional bias: low complexity; sequence STVKNSDNNNQNQTNPQNQNTN. A TTL domain is found at 911-1250; the sequence is RFIFNITVIA…QNNLQEDLEI (340 aa). Residues 1058 to 1061, K1079, and D1081 contribute to the ATP site; that span reads QKYI. IQ domains are found at residues 1320–1349 and 1348–1377; these read QYWG…QKFT and FTFA…QQQT.

It is found in the cell projection. The protein resides in the cilium. The protein localises to the cytoplasm. It localises to the cytoskeleton. Its subcellular location is the cilium axoneme. Its function is as follows. Probable glycylase which modifies tubulin, generating side chains of glycine on the gamma-carboxyl groups of specific glutamate residues within the C-terminal tail of tubulin. The chain is Tubulin glycylase 3E (TTLL3E) from Tetrahymena thermophila (strain SB210).